Consider the following 162-residue polypeptide: Ubiquitin-fold modifier-conjugating enzyme 1 (162 aa).

Cys115 (glycyl thioester intermediate) is an active-site residue.

This sequence belongs to the ubiquitin-conjugating enzyme family. UFC1 subfamily. Interacts with uba-5. As to expression, expressed in the intestine.

Functionally, E2-like enzyme which forms an intermediate with ufm-1. The intermediate is formed via a thioester linkage. In Caenorhabditis elegans, this protein is Ubiquitin-fold modifier-conjugating enzyme 1.